The sequence spans 60 residues: UPF0434 protein NMC0623 (60 aa).

This sequence belongs to the UPF0434 family.

The sequence is that of UPF0434 protein NMC0623 from Neisseria meningitidis serogroup C / serotype 2a (strain ATCC 700532 / DSM 15464 / FAM18).